A 312-amino-acid polypeptide reads, in one-letter code: Olfactory receptor-like protein COR2 (312 aa).

Residues 1–26 lie on the Extracellular side of the membrane; it reads MASGNCTTPTTFILSGLTDNPRLQMP. Asparagine 5 carries N-linked (GlcNAc...) asparagine glycosylation. Residues 27 to 49 traverse the membrane as a helical segment; that stretch reads LFMVFLVIYTTTLLTNLGLIALI. Over 50–57 the chain is Cytoplasmic; it reads GMDLHLQT. A helical membrane pass occupies residues 58–79; sequence PMYIFLQNLSFTDAAYSTVITP. At 80-100 the chain is on the extracellular side; that stretch reads KMLATFLEERRTISYVGCILQ. Residues cysteine 97 and cysteine 179 are joined by a disulfide bond. The chain crosses the membrane as a helical span at residues 101–120; sequence YFSFVLLTTSEWLLLAVMAY. Topologically, residues 121–139 are cytoplasmic; that stretch reads DRYVAICKPLLYPSIMTKA. A helical transmembrane segment spans residues 140-164; it reads VCWRLVKGLYSLAFLNSLVHTSGLL. Residues 165–205 are Extracellular-facing; that stretch reads KLSFCSSNVVNHFFCDNRPLFQISSSSTTLNELLVIISGSL. The helical transmembrane segment at 206-226 threads the bilayer; that stretch reads FVMSSIITILISYVFIILTVV. Topologically, residues 227 to 239 are cytoplasmic; that stretch reads MIRSKDGKYKAFS. A helical transmembrane segment spans residues 240–260; it reads TCTSHLMAVSLFHGTVIFMYL. At 261 to 271 the chain is on the extracellular side; that stretch reads RSVKLFSLDTD. The helical transmembrane segment at 272-292 threads the bilayer; it reads KIASLFYTVVIPMLNPLIYSW. Topologically, residues 293–312 are cytoplasmic; that stretch reads RNKEVKDALRRLTATSVWLH.

The protein belongs to the G-protein coupled receptor 1 family.

It localises to the cell membrane. Its function is as follows. Odorant receptor. In Gallus gallus (Chicken), this protein is Olfactory receptor-like protein COR2 (COR2).